Reading from the N-terminus, the 81-residue chain is Carboxysome shell vertex protein CsoS4B (81 aa).

The 77-residue stretch at 1 to 77 (MEVMRVRSDL…TDLTIGGIID (77 aa)) folds into the BMV domain.

This sequence belongs to the CcmL/EutN family. CsoS4 subfamily. In terms of assembly, homopentamer.

It localises to the carboxysome. Its function is as follows. Probably forms vertices in the carboxysome. Has been modeled to induce curvature upon insertion into an otherwise flat hexagonal layer of major carboxysome subunits. A minor shell protein, only 12 pentamers of CsoS4A/CsoS4B are calculated to be present in each carboxysome. The 2 CsoS4 proteins contribute to the impermeability of the carboxysome to CO(2). Its central pore is probably too small to allow passage of metabolites; its function might be to anchor different proteins or metabolites to the carboxysome. Functionally, unlike beta-carboxysomes, alpha-carboxysomes (Cb) can form without cargo protein. CsoS2 is essential for Cb formation and is also capable of targeting foreign proteins to the Cb. The Cb shell assembles with the aid of CsoS2; CsoS1A, CsoS1B and CsoS1C form the majority of the shell while CsoS4A and CsoS4B form vertices. CsoS1D forms pseudohexamers that probably control metabolite flux into and out of the shell. This is Carboxysome shell vertex protein CsoS4B from Halothiobacillus neapolitanus (strain ATCC 23641 / c2) (Thiobacillus neapolitanus).